The sequence spans 230 residues: Small ribosomal subunit protein uS3 (230 aa).

A KH type-2 domain is found at 39 to 107 (VRKYLADKLQ…PAQINIAEIR (69 aa)).

Belongs to the universal ribosomal protein uS3 family. Part of the 30S ribosomal subunit. Forms a tight complex with proteins S10 and S14.

Binds the lower part of the 30S subunit head. Binds mRNA in the 70S ribosome, positioning it for translation. This Shewanella oneidensis (strain ATCC 700550 / JCM 31522 / CIP 106686 / LMG 19005 / NCIMB 14063 / MR-1) protein is Small ribosomal subunit protein uS3.